The chain runs to 251 residues: NADPH-dependent oxidoreductase (251 aa).

This sequence belongs to the flavin oxidoreductase frp family. It depends on FMN as a cofactor.

Reduces FMN, organic nitro compounds and disulfide DTNB. Involved in maintenance of the cellular redox state and the disulfide stress response. In Staphylococcus aureus (strain USA300), this protein is NADPH-dependent oxidoreductase (nfrA).